Reading from the N-terminus, the 235-residue chain is Ubiquitin-like-conjugating enzyme ATG10 (235 aa).

Cys196 serves as the catalytic Glycyl thioester intermediate.

The protein belongs to the ATG10 family. As to quaternary structure, forms homooligomers. Interacts with ATG7 and ATG12.

The protein localises to the preautophagosomal structure membrane. E2-like enzyme required for the cytoplasm to vacuole transport (Cvt), autophagy and nucleophagy. Acts as an E2-like enzyme that catalyzes the conjugation of ATG12 to ATG5. ATG12 conjugation to ATG5 is required for proper localization of ATG8 to the preautophagosomal structure (PAS). Likely serves as an ATG5-recognition molecule. Autophagy is required for proper vegetative growth, asexual/sexual reproduction, and full virulence. Autophagy is particularly involved in the biosynthesis of deoxynivalenol (DON), an important virulence determinant. In Gibberella zeae (strain ATCC MYA-4620 / CBS 123657 / FGSC 9075 / NRRL 31084 / PH-1) (Wheat head blight fungus), this protein is Ubiquitin-like-conjugating enzyme ATG10.